Reading from the N-terminus, the 335-residue chain is RNA 3'-terminal phosphate cyclase (335 aa).

Residues Gln-101 and 282–285 (HMGD) contribute to the ATP site. His-306 acts as the Tele-AMP-histidine intermediate in catalysis.

It belongs to the RNA 3'-terminal cyclase family. Type 1 subfamily.

The protein localises to the cytoplasm. It carries out the reaction a 3'-end 3'-phospho-ribonucleotide-RNA + ATP = a 3'-end 2',3'-cyclophospho-ribonucleotide-RNA + AMP + diphosphate. In terms of biological role, catalyzes the conversion of 3'-phosphate to a 2',3'-cyclic phosphodiester at the end of RNA. The mechanism of action of the enzyme occurs in 3 steps: (A) adenylation of the enzyme by ATP; (B) transfer of adenylate to an RNA-N3'P to produce RNA-N3'PP5'A; (C) and attack of the adjacent 2'-hydroxyl on the 3'-phosphorus in the diester linkage to produce the cyclic end product. The biological role of this enzyme is unknown but it is likely to function in some aspects of cellular RNA processing. This Sulfolobus acidocaldarius (strain ATCC 33909 / DSM 639 / JCM 8929 / NBRC 15157 / NCIMB 11770) protein is RNA 3'-terminal phosphate cyclase.